The chain runs to 303 residues: N-acetylmuramic acid 6-phosphate etherase (303 aa).

The region spanning 61-224 (IVQAFQQGGR…TTASMILLGK (164 aa)) is the SIS domain. The active-site Proton donor is Glu89. The active site involves Glu120.

It belongs to the GCKR-like family. MurNAc-6-P etherase subfamily. As to quaternary structure, homodimer.

The catalysed reaction is N-acetyl-D-muramate 6-phosphate + H2O = N-acetyl-D-glucosamine 6-phosphate + (R)-lactate. Its pathway is amino-sugar metabolism; 1,6-anhydro-N-acetylmuramate degradation. It participates in amino-sugar metabolism; N-acetylmuramate degradation. The protein operates within cell wall biogenesis; peptidoglycan recycling. Specifically catalyzes the cleavage of the D-lactyl ether substituent of MurNAc 6-phosphate, producing GlcNAc 6-phosphate and D-lactate. Together with AnmK, is also required for the utilization of anhydro-N-acetylmuramic acid (anhMurNAc) either imported from the medium or derived from its own cell wall murein, and thus plays a role in cell wall recycling. The chain is N-acetylmuramic acid 6-phosphate etherase (murQ) from Haemophilus influenzae (strain ATCC 51907 / DSM 11121 / KW20 / Rd).